We begin with the raw amino-acid sequence, 250 residues long: Dimethyl sulfide dehydrogenase assembly chaperone protein (250 aa).

A disordered region spans residues 231-250 (SAEARSDSAPDAAAHQNLWG).

Belongs to the type II DMSO reductase enzyme chaperone family.

It is found in the cytoplasm. May function as a system-specific chaperone protein essential for the assembly of an active dimethyl sulfide dehydrogenase DdhABC. The polypeptide is Dimethyl sulfide dehydrogenase assembly chaperone protein (ddhD) (Rhodovulum sulfidophilum (Rhodobacter sulfidophilus)).